The following is a 1284-amino-acid chain: MRPPRSNTKAAFSSLQFGLLCLLLLVNNGIKSVQADAFTDYFSDYDCNQPLMERAVLTATSSLTERGPDKARLNGNAAWTPVENTYNHFLTLDLGDPRMVRKIATMGRMHTDEFVTEYIVQYSDDGEFWRSYVNPTSEPQMFKGNSDGNSIHYNVFEVPIIAQWVRINPTRWHDRISMRVELYGCDYISENLYFNGTGLVRYDLRREPITSTKESIRFRFKTAFANGVMMYSRGTQGDYYALQLKDNKMVLNLDLGSRVMTSLSVGSLLDDNVWHDVVISRNQRDIIFSVDRVIVRGRIQGEFTRLNLNRELYLGGVPNVQEGLIVQQNFSGCLENIYFNSTNFIRVMKDSTELGEGYLFTRVNTIYACPSPPIYPVTFTTRSSFVRLKGYENSQRLNVSFYFRTYEETGVMLHHDFYSGGYLKVFLEFGKVKIDLKVKDKARIILDNYDDQFNDGKWHSFVISIEKNRLILNIDQRPMTTTKSMQVATGAQYYIAGGKDKNGFVGCMRLISVDGNYKLPQDWVKGEEVCCGDDVVVDACQMIDRCNPNPCQHKGLCHQNSREFFCDCGHTGYAGAVCHTSNNPLSCLALKNVQHVQQRVNLNLDVDGSGPLEPFPVTCEFYSDGRVITTLSHSQEHTTTVDGFQEPGSFEQSIMYDANQLQIEALLNRSHSCWQRLSYSCRSSRLFNSPSEAGNFRPFSWWISRHNQPMDYWAGALPGSRKCECGILGKCHDPTKWCNCDSNSLEWMEDGGDIREKEYLPVRAVKFGDTGTPLDEKMGRYTLGPLRCEGDDLFSNVVTFRIADASINLPPFDMGHSGDIYLEFRTTQENSVIFHATGPTDYIKLSLNGGNKLQFQYQAGSGPLGVNVGTSYHLNDNNWHTVSVERNRKEARLVVDGSIKAEVREPPGPVRALHLTSDLVIGATTEYRDGYVGCIRALLLNGKMVDLKEYSKRGLYGISTGCVGRCESNPCLNNGTCIERYDGYSCDCRWSAFKGPICADEIGVNLRSSSIIRYEFEGSFRSTIAENIRVGFTTTIPKGFLLGFSSNLTGEYLTIQISNSGHLRCVFDFGFERQEIIFPKKHFGLGQYHDMHFMRKNGGSTVVLKVDNYEPVEYNFDIKASADAQFNNIQYMYIGKNESMTDGFVGCVSRVQFDDIYPLKLMFQQNPPKNVKSLGTQLTEDFCGVEPVTHPPIEIETRPPPLVDEEKLRKAYNEVDSVLLACLLVILFLLLILMFFLIGRYLHRHKGDYLTHEDQGADGADDPDDAVLHSTTGHQVRKRTEIFI.

The first 35 residues, 1–35 (MRPPRSNTKAAFSSLQFGLLCLLLLVNNGIKSVQA), serve as a signal peptide directing secretion. At 36–1217 (DAFTDYFSDY…LRKAYNEVDS (1182 aa)) the chain is on the extracellular side. One can recognise an F5/8 type C domain in the interval 47-185 (CNQPLMERAV…ISMRVELYGC (139 aa)). The cysteines at positions 47 and 185 are disulfide-linked. 4 N-linked (GlcNAc...) asparagine glycosylation sites follow: N195, N329, N340, and N398. One can recognise a Laminin G-like 1 domain in the interval 220 to 369 (FKTAFANGVM…FTRVNTIYAC (150 aa)). Residues C333 and C369 are joined by a disulfide bond. The Laminin G-like 2 domain occupies 403 to 540 (FRTYEETGVM…CGDDVVVDAC (138 aa)). Intrachain disulfides connect C507–C540, C546–C557, C551–C566, and C568–C578. Residues 542–579 (MIDRCNPNPCQHKGLCHQNSREFFCDCGHTGYAGAVCH) enclose the EGF-like 1 domain. The N-linked (GlcNAc...) asparagine glycan is linked to N668. A Laminin G-like 3 domain is found at 824–962 (FRTTQENSVI…RGLYGISTGC (139 aa)). 4 disulfides stabilise this stretch: C934-C962, C966-C977, C971-C986, and C988-C998. Residues 962-999 (CVGRCESNPCLNNGTCIERYDGYSCDCRWSAFKGPICA) form the EGF-like 2 domain. A glycan (N-linked (GlcNAc...) asparagine) is linked at N974. The Laminin G-like 4 domain maps to 1032 to 1183 (FTTTIPKGFL…LGTQLTEDFC (152 aa)). N-linked (GlcNAc...) asparagine glycans are attached at residues N1047 and N1137. C1147 and C1183 are disulfide-bonded. The chain crosses the membrane as a helical span at residues 1218-1238 (VLLACLLVILFLLLILMFFLI). The Cytoplasmic portion of the chain corresponds to 1239 to 1284 (GRYLHRHKGDYLTHEDQGADGADDPDDAVLHSTTGHQVRKRTEIFI).

Belongs to the neurexin family. In terms of assembly, forms a complex with Nrg and Cont. Forms a complex composed of septa junction proteins Nrx-IV/Nrx, Tsf2/MTf, Cont and Nrg during late embryogenesis. The C-terminal region interacts with coracle. Interacts with Patj in cis form. In terms of tissue distribution, found in septate junctions of epithelial and glial cells.

It is found in the cell membrane. Its subcellular location is the cell junction. The protein resides in the septate junction. Seems to play a role in the formation and function of septate junctions. Septate junctions, which are the equivalent of vertebrates tight junctions, are characterized by regular arrays of transverse structures that span the intermembrane space and form a physical barrier to diffusion. Required for the blood-brain barrier formation. This is Neurexin-4 (Nrx-IV) from Drosophila melanogaster (Fruit fly).